The chain runs to 333 residues: Receptor polysaccharide phosphotransferase WefC (333 aa).

This sequence belongs to the stealth family.

In terms of biological role, part of the type 2Gn receptor polysaccharide (RPS) biosynthesis locus. Essential for cell surface RPS production, and for synthesis of the host-like GalNAc beta 1-3Gal (Gn) motif of the RPS. Probably encodes a 1-3Gal alpha transferase. This chain is Receptor polysaccharide phosphotransferase WefC (wefC), found in Streptococcus gordonii.